Here is a 176-residue protein sequence, read N- to C-terminus: Negative modulator of initiation of replication (176 aa).

This sequence belongs to the SeqA family. As to quaternary structure, homodimer. Polymerizes to form helical filaments.

It is found in the cytoplasm. Functionally, negative regulator of replication initiation, which contributes to regulation of DNA replication and ensures that replication initiation occurs exactly once per chromosome per cell cycle. Binds to pairs of hemimethylated GATC sequences in the oriC region, thus preventing assembly of replication proteins and re-initiation at newly replicated origins. Repression is relieved when the region becomes fully methylated. This chain is Negative modulator of initiation of replication, found in Hamiltonella defensa subsp. Acyrthosiphon pisum (strain 5AT).